Reading from the N-terminus, the 137-residue chain is Nucleoside diphosphate kinase (137 aa).

Positions 10, 58, 86, 92, 103, and 113 each coordinate ATP. The active-site Pros-phosphohistidine intermediate is His116.

Belongs to the NDK family. Homotetramer. Mg(2+) is required as a cofactor.

It is found in the cytoplasm. It catalyses the reaction a 2'-deoxyribonucleoside 5'-diphosphate + ATP = a 2'-deoxyribonucleoside 5'-triphosphate + ADP. It carries out the reaction a ribonucleoside 5'-diphosphate + ATP = a ribonucleoside 5'-triphosphate + ADP. Major role in the synthesis of nucleoside triphosphates other than ATP. The ATP gamma phosphate is transferred to the NDP beta phosphate via a ping-pong mechanism, using a phosphorylated active-site intermediate. The sequence is that of Nucleoside diphosphate kinase from Helicobacter pylori (strain ATCC 700392 / 26695) (Campylobacter pylori).